Consider the following 146-residue polypeptide: Putative phosphotransferase enzyme IIA component YadI (146 aa).

The PTS EIIA type-4 domain occupies methionine 1–valine 124. Histidine 9 functions as the Tele-phosphohistidine intermediate in the catalytic mechanism.

The protein resides in the cytoplasm. The phosphoenolpyruvate-dependent sugar phosphotransferase system (sugar PTS), a major carbohydrate active -transport system, catalyzes the phosphorylation of incoming sugar substrates concomitantly with their translocation across the cell membrane. The protein is Putative phosphotransferase enzyme IIA component YadI (yadI) of Escherichia coli (strain K12).